Here is a 355-residue protein sequence, read N- to C-terminus: Elongation factor Ts (355 aa).

The interval T82–V85 is involved in Mg(2+) ion dislocation from EF-Tu.

The protein belongs to the EF-Ts family.

The protein localises to the cytoplasm. Its function is as follows. Associates with the EF-Tu.GDP complex and induces the exchange of GDP to GTP. It remains bound to the aminoacyl-tRNA.EF-Tu.GTP complex up to the GTP hydrolysis stage on the ribosome. The chain is Elongation factor Ts from Helicobacter acinonychis (strain Sheeba).